The sequence spans 688 residues: Lectin-domain containing receptor kinase VI.3 (688 aa).

An N-terminal signal peptide occupies residues 1-14; sequence MLVLFLLLTIPTRA. At 15–306 the chain is on the extracellular side; that stretch reads QRTTTETPKT…KRGYNSQVLA (292 aa). Residues 22–271 form a legume-lectin like region; it reads PKTEFIFRGF…AHYVMGWSFS (250 aa). Residues 307-327 form a helical membrane-spanning segment; the sequence is LIVALSGVTVILLALLFFFVM. Topologically, residues 328 to 688 are cytoplasmic; the sequence is YKKRLQQGEV…VSSSSVISGR (361 aa). In terms of domain architecture, Protein kinase spans 361–640; the sequence is FKENRIVGTG…LNGDDDVPEI (280 aa). ATP contacts are provided by residues 367 to 375 and Lys-391; that span reads VGTGGFGTV. Residue Asp-490 is the Proton acceptor of the active site. Residues 662–688 form a disordered region; that stretch reads VSSDRASSSVPSFSVTRVSSSSVISGR.

This sequence in the C-terminal section; belongs to the protein kinase superfamily. Ser/Thr protein kinase family. In the N-terminal section; belongs to the leguminous lectin family.

Its subcellular location is the cell membrane. It carries out the reaction L-seryl-[protein] + ATP = O-phospho-L-seryl-[protein] + ADP + H(+). The enzyme catalyses L-threonyl-[protein] + ATP = O-phospho-L-threonyl-[protein] + ADP + H(+). Involved in negative regulation of abscisic acid response in seed germination. The sequence is that of Lectin-domain containing receptor kinase VI.3 (LECRK63) from Arabidopsis thaliana (Mouse-ear cress).